Here is an 865-residue protein sequence, read N- to C-terminus: Aconitate hydratase B (865 aa).

Substrate is bound by residues Arg-191, 244–246, 414–416, and Ser-498; these read SSR and QDT. [4Fe-4S] cluster-binding residues include Cys-710, Cys-769, and Cys-772. Residues Arg-791 and Arg-796 each contribute to the substrate site.

The protein belongs to the aconitase/IPM isomerase family. As to quaternary structure, monomer. AcnB can also form a homodimer. The monomer-homodimer transition is dependent on iron availability and the carboxymethylation of C-273 inhibits the dimer formation. [4Fe-4S] cluster serves as cofactor.

The catalysed reaction is citrate = D-threo-isocitrate. The enzyme catalyses (2S,3R)-3-hydroxybutane-1,2,3-tricarboxylate = 2-methyl-cis-aconitate + H2O. Its pathway is organic acid metabolism; propanoate degradation. It participates in carbohydrate metabolism; tricarboxylic acid cycle; isocitrate from oxaloacetate: step 2/2. Involved in the catabolism of short chain fatty acids (SCFA) via the tricarboxylic acid (TCA)(acetyl degradation route) and the 2-methylcitrate cycle I (propionate degradation route). Catalyzes the reversible isomerization of citrate to isocitrate via cis-aconitate. Also catalyzes the hydration of 2-methyl-cis-aconitate to yield (2R,3S)-2-methylisocitrate. The apo form of AcnB functions as a RNA-binding regulatory protein. During oxidative stress inactive AcnB apo-enzyme without iron sulfur clusters binds the acnB mRNA 3' UTRs (untranslated regions), stabilizes acnB mRNA and increases AcnB synthesis, thus mediating a post-transcriptional positive autoregulatory switch. AcnB also decreases the stability of the sodA transcript. In Escherichia coli (strain K12), this protein is Aconitate hydratase B.